The following is an 885-amino-acid chain: Alpha-actinin (885 aa).

The interval 1 to 242 (MTQDGYMQQE…IMTYVSWYYH (242 aa)) is actin-binding. Calponin-homology (CH) domains lie at 26-130 (KQQR…LRFA) and 139-245 (MTAK…HAFH). Spectrin repeat units follow at residues 270–377 (LMEE…EEWL), 389–494 (HLAQ…ALDE), 508–614 (EFAK…HTLQ), and 626–727 (LRRQ…NEVE). EF-hand domains follow at residues 741–776 (EQLN…LGYN) and 780–815 (DDRP…EYTD). Ca(2+) contacts are provided by Asp-754, Thr-758, Arg-760, Glu-765, Asp-793, Asn-795, Thr-797, and Tyr-799.

This sequence belongs to the alpha-actinin family. Homodimer; antiparallel.

Functionally, F-actin cross-linking protein which is thought to anchor actin to a variety of intracellular structures. This is a bundling protein. The sequence is that of Alpha-actinin from Dermatophagoides farinae (American house dust mite).